Here is a 1763-residue protein sequence, read N- to C-terminus: MTRAKVIYFSGEIPQGDPEGDQRNLFRKLHLLSKERDYPILASFLETVTWAMKEEHRRLVRAQRDLLPTFESILDLTDHVVELRKTSLGGAIERVLVLAFQLGSFIAYHEAHPLEYNFQASDTFLIARGPGMLSAAAVALCPSLPMISSISADITRVAFRFGLVVDQVCRSLEVSPDEINSAGAWIYCVYGVDPQKAHEAVTRFNAEKAYAETSMASVFNDDGKSVSIGGPPSTLKTLFTECDFFKRTKNVPMKKVQGMWHTGKVYGTEHVHQIIPKIHQKHQLYLPLFSPVKGQPLEAASATDLLEQIMEEMLTQRIRWDRTIQNVTERLKQASPESTQLIAIQPSQYVESLIGQWRADMPTTTHTTEDMMSAVMDLPLGNSRAKDAKSSKIAVVGMACRFPGGADNAEKFWELLAQGRDVHSPIPSDRFNIETHVDPAGKVPNTSKTPYGCFVDNPGLFDAMFFGMSPREAEQTDPMQRLALVTAYEALEHSGYVHGRGIHARRVGTFYGQASDDYREVNSGQDVGTYFIPGGCRAFGPGRINYFFKFWGPSFSVDTACSSSLAAIQAACTSLWSGDVDMAITGGMNIITNSDVYAGLSNGHFLSPTGGCKTWDEGADGYCRADGVGSVVLKRLEDAEADNDNILGVVLAAATDHSAEAVSITHPHDVAQAHLYNQVARRAGIDPLAVGYVEMHGTGTQAGDSNEMKSVTNVFAPSTGHIRDRDSPLHIGTVKSNMGHGEAAAGIMAFVKTMLVFQKGIIPPHIGIKTRFNPALPEDLAKRNVVIPVTAAIWVRNSDRKRLAMVNNFGAAGGNTSIIIEEAAPRPRTSEDVRKAQVITVSAKTANSLQENLKALVDYIEARSELSVADLAYTLSARRNHYNYRVSVLATSTAEAASLLRPHIKTSLSQTPHSGKQVPIAFAFTGQGTFYIGIGAQLYRDSHEFRKHIDQLDSLVRRQNFASFLPVVSGNVQPEDVSIVTMNLAIVCVEIALARLWESFGIKPSMVIGHSLGEYAALAVAGVLSDSAAIFLVGTRARLLTSKCTSRTHGMLSVRASAADIKHAGGDIPFEVSCINGPNETVLGGTLSNMEALSATLAAAGYRTFKLDLPHAYHTYQMDTIVDELVKQTETVVCKKTTIPIISPRFSRVMTSEDSIDVSYLIGATRETVDFAGALDDAWQSGLVNESTIWLEMGHHPTCSGFISRTLSSTRMALPSLQRDTDNWLTLAKTLCSLYSAGIPIDWNEYHRPFEQALRLIDAPTYAWTNKNYWIQYRGDWNLTKGRAMPKLDPTTTVVPVSKRFQTSSIHRLISEQYTDGKAILSAESSITDPSLQGVVDGHAMNGYGVASSFLHAEMAFTLAKRVSDKSFASAVSFGINVADFEYHEPVVKLINTSEPQPILVSAEADLEKMEVHVKWFNPAKEIWYCHATVFYEDPSSWLSTWSRSTKLITSRIDALNDMAVTGKASKLTTDLAYSLFGKLVGYSKLYQTMQSVILNEDEAMAEVQFPEDTGGSWTVPPHFIDGLISLSGFILNGGTHFDNTNNFFITPSWKSMRFARPLTPGGRYTAYVRMVPSDNHSFVGDVYVLQGSEIVGVVEAILFLQWPRVMLNRFFRPADVTAKPAAKVPGKSEPSTRPHFKPHHVSRHKPTLTPRSPDEGSENSDSSGVIISRPGGYSSSDQDMEELPSPPAGMNDDMEKALALVAEELAVDIGLLTDDALIADLGLDSLMSLVMSQRLREELGLEIRDAFFLEITTIQDLKALLR.

Residues 20–261 (GDQRNLFRKL…PMKKVQGMWH (242 aa)) form an N-terminal acylcarrier protein transacylase domain (SAT) region. The Ketosynthase family 3 (KS3) domain maps to 390-822 (SSKIAVVGMA…GGNTSIIIEE (433 aa)). Catalysis depends on for beta-ketoacyl synthase activity residues Cys561, His696, and His740. The interval 922-1227 (FAFTGQGTFY…QRDTDNWLTL (306 aa)) is malonyl-CoA:ACP transacylase (MAT) domain. The tract at residues 1307–1439 (HRLISEQYTD…VFYEDPSSWL (133 aa)) is N-terminal hotdog fold. The 303-residue stretch at 1307–1609 (HRLISEQYTD…FLQWPRVMLN (303 aa)) folds into the PKS/mFAS DH domain. Residues 1334-1588 (GVVDGHAMNG…FVGDVYVLQG (255 aa)) are product template (PT) domain. His1339 acts as the Proton acceptor; for dehydratase activity in catalysis. The tract at residues 1461–1609 (VTGKASKLTT…FLQWPRVMLN (149 aa)) is C-terminal hotdog fold. The active-site Proton donor; for dehydratase activity is the Asp1522. The segment at 1619–1690 (AKPAAKVPGK…MEELPSPPAG (72 aa)) is disordered. The span at 1635–1647 (PHFKPHHVSRHKP) shows a compositional bias: basic residues. In terms of domain architecture, Carrier spans 1689 to 1763 (AGMNDDMEKA…TIQDLKALLR (75 aa)). Ser1726 carries the post-translational modification O-(pantetheine 4'-phosphoryl)serine.

Non-reducing polyketide synthase that mediates the biosynthesis of alternariol (AOH), a micotoxin that seems not to be involved in virulence and oxidative stress tolerance. PKS19 alone is sufficient for AOH synthesis which is initiated by priming with acetyl-CoA, followed by sequential condensations of 6 malonyl-CoA units. The polypeptide is Non-reducing polyketide synthase PKS19 (Phaeosphaeria nodorum (strain SN15 / ATCC MYA-4574 / FGSC 10173) (Glume blotch fungus)).